A 229-amino-acid chain; its full sequence is MLKIQNLKKSYGKRTILNNVNMNIPKGKVYALIGPNGAGKSTIMKILTGLVSKTSGSIIFEGREWSRRDLRKIGSIIEEPPLYKNLSAYDNMKVVTTMLGVSESTILPLLNKVGLGNIDKRPVKQFSLGMKQRLGIAISLINSPKLLILDEPTNGLDPIGIQELREIIESFKSEGMTIMISSHILSEVEHLADFIGFIYEGKIILEKEYDGSENLEELFNNQILFEKRR.

One can recognise an ABC transporter domain in the interval 2–225 (LKIQNLKKSY…EELFNNQILF (224 aa)). 34–41 (GPNGAGKS) provides a ligand contact to ATP.

The protein belongs to the ABC transporter superfamily.

In terms of biological role, implicated in the export process of the lantibiotic SrtA. In Streptococcus pyogenes serotype M1, this protein is Lantibiotic transport ATP-binding protein SrtF (srtF).